The primary structure comprises 179 residues: Large ribosomal subunit protein uL6 (179 aa).

It belongs to the universal ribosomal protein uL6 family. Part of the 50S ribosomal subunit.

Its function is as follows. This protein binds to the 23S rRNA, and is important in its secondary structure. It is located near the subunit interface in the base of the L7/L12 stalk, and near the tRNA binding site of the peptidyltransferase center. The chain is Large ribosomal subunit protein uL6 from Mycobacterium tuberculosis (strain ATCC 25618 / H37Rv).